Here is a 725-residue protein sequence, read N- to C-terminus: G-quartet DNA-binding protein TGP1 (725 aa).

Residues 241 to 258 (KKALTDVLQIHEKKERVH) carry the Nuclear localization signal motif. Disordered stretches follow at residues 252 to 284 (EKKERVHKQQNKNKNPRNAHKNHNRQRPNLQET) and 468 to 614 (EIHK…GKRG). A compositionally biased stretch (basic residues) spans 256–277 (RVHKQQNKNKNPRNAHKNHNRQ). Positions 468-478 (EIHKIDRERKR) are enriched in basic and acidic residues. Over residues 517–544 (NKYKNTSVQNNNNNKNQQRSQSQNQRPP) the composition is skewed to low complexity. The span at 545–564 (RNYDNRQGGENRNNRQRNEN) shows a compositional bias: basic and acidic residues. Residues 565-593 (NRNNFNGNGHRVNNQNNQRNRNSSYPRNN) show a composition bias toward low complexity.

In terms of processing, the N-terminus is blocked.

It is found in the nucleus. In terms of biological role, binds specifically to parallel G4-DNA, a four-stranded structure stabilized by tetrads of hydrogen-bonded guanines. The chain is G-quartet DNA-binding protein TGP1 (TGP1) from Tetrahymena thermophila.